The following is a 320-amino-acid chain: Cytochrome f (320 aa).

A signal peptide spans 1–35 (MQTRNTFSWIREEITRSISVSLIIYIITWASISSA). Heme contacts are provided by Tyr36, Cys56, Cys59, and His60. The helical transmembrane segment at 286–305 (VQGLLFFLGSVVLAQIFLVL) threads the bilayer.

The protein belongs to the cytochrome f family. The 4 large subunits of the cytochrome b6-f complex are cytochrome b6, subunit IV (17 kDa polypeptide, petD), cytochrome f and the Rieske protein, while the 4 small subunits are PetG, PetL, PetM and PetN. The complex functions as a dimer. It depends on heme as a cofactor.

The protein resides in the plastid. It is found in the chloroplast thylakoid membrane. Its function is as follows. Component of the cytochrome b6-f complex, which mediates electron transfer between photosystem II (PSII) and photosystem I (PSI), cyclic electron flow around PSI, and state transitions. The polypeptide is Cytochrome f (petA) (Arabidopsis thaliana (Mouse-ear cress)).